We begin with the raw amino-acid sequence, 812 residues long: Mitochondrial intermediate peptidase (812 aa).

Residues 1-29 (MRLSRQLLRSTPFLTRAKPVSGKVSHFRS) constitute a mitochondrion transit peptide. The interval 19 to 49 (PVSGKVSHFRSRTDLKGGSSNSSKSPDSVGD) is disordered. The span at 37 to 46 (SSNSSKSPDS) shows a compositional bias: low complexity. Histidine 595 contributes to the Zn(2+) binding site. Glutamate 596 is an active-site residue. Positions 599 and 602 each coordinate Zn(2+).

It belongs to the peptidase M3 family. It depends on Zn(2+) as a cofactor.

Its subcellular location is the mitochondrion matrix. The enzyme catalyses Release of an N-terminal octapeptide as second stage of processing of some proteins imported into the mitochondrion.. Its function is as follows. Cleaves proteins, imported into the mitochondrion, to their mature size. While most mitochondrial precursor proteins are processed to the mature form in one step by mitochondrial processing peptidase (MPP), the sequential cleavage by MIP of an octapeptide after initial processing by MPP is a required step for a subgroup of nuclear-encoded precursor proteins destined for the matrix or the inner membrane. This chain is Mitochondrial intermediate peptidase (OCT1), found in Scheffersomyces stipitis (strain ATCC 58785 / CBS 6054 / NBRC 10063 / NRRL Y-11545) (Yeast).